The primary structure comprises 342 residues: UDP-N-acetylenolpyruvoylglucosamine reductase (342 aa).

Residues 17 to 192 form the FAD-binding PCMH-type domain; sequence RFEAAARYAA…AEVTFALPVD (176 aa). The active site involves Arg168. Ser242 functions as the Proton donor in the catalytic mechanism. Residue Glu338 is part of the active site.

Belongs to the MurB family. FAD serves as cofactor.

It is found in the cytoplasm. It carries out the reaction UDP-N-acetyl-alpha-D-muramate + NADP(+) = UDP-N-acetyl-3-O-(1-carboxyvinyl)-alpha-D-glucosamine + NADPH + H(+). It participates in cell wall biogenesis; peptidoglycan biosynthesis. Functionally, cell wall formation. The chain is UDP-N-acetylenolpyruvoylglucosamine reductase from Ralstonia nicotianae (strain ATCC BAA-1114 / GMI1000) (Ralstonia solanacearum).